Here is an 823-residue protein sequence, read N- to C-terminus: Lon protease (823 aa).

Positions 51-246 constitute a Lon N-terminal domain; the sequence is IPILPLRNMV…RLLFILNREY (196 aa). Residue 397–404 participates in ATP binding; sequence GPPGVGKT. The 183-residue stretch at 633-815 folds into the Lon proteolytic domain; that stretch reads NDYAGVVTGL…QQVVDLALLR (183 aa). Residues S721 and K764 contribute to the active site.

Belongs to the peptidase S16 family. Homohexamer. Organized in a ring with a central cavity.

It is found in the cytoplasm. The enzyme catalyses Hydrolysis of proteins in presence of ATP.. ATP-dependent serine protease that mediates the selective degradation of mutant and abnormal proteins as well as certain short-lived regulatory proteins. Required for cellular homeostasis and for survival from DNA damage and developmental changes induced by stress. Degrades polypeptides processively to yield small peptide fragments that are 5 to 10 amino acids long. Binds to DNA in a double-stranded, site-specific manner. The polypeptide is Lon protease (Parabacteroides distasonis (strain ATCC 8503 / DSM 20701 / CIP 104284 / JCM 5825 / NCTC 11152)).